The sequence spans 234 residues: Uridylate kinase (234 aa).

9–12 contacts ATP; that stretch reads KLSG. G51 contributes to the UMP binding site. ATP is bound by residues G52 and R56. Residues D71 and 132 to 139 each bind UMP; that span reads CGNPFFTT. The ATP site is built by T159, Y165, and D168.

It belongs to the UMP kinase family. Homohexamer.

The protein localises to the cytoplasm. It catalyses the reaction UMP + ATP = UDP + ADP. The protein operates within pyrimidine metabolism; CTP biosynthesis via de novo pathway; UDP from UMP (UMPK route): step 1/1. Its activity is regulated as follows. Inhibited by UTP. Functionally, catalyzes the reversible phosphorylation of UMP to UDP. The polypeptide is Uridylate kinase (Prochlorococcus marinus (strain AS9601)).